The following is a 548-amino-acid chain: Membrane protein insertase YidC (548 aa).

Residues 6-26 (NLLVIALLFVSFMIWQAWEQD) form a helical membrane-spanning segment. Residues 28–56 (NPQPQTQQTTQTTTTAAGSAADQGVPASG) form a disordered region. Over residues 29-42 (PQPQTQQTTQTTTT) the composition is skewed to low complexity. Transmembrane regions (helical) follow at residues 350 to 370 (FVGN…GIMY), 424 to 444 (FPLI…MGSI), 458 to 478 (LSAQ…MFFI), and 499 to 519 (PVIF…YYIV).

The protein belongs to the OXA1/ALB3/YidC family. Type 1 subfamily. In terms of assembly, interacts with the Sec translocase complex via SecD. Specifically interacts with transmembrane segments of nascent integral membrane proteins during membrane integration.

The protein localises to the cell inner membrane. Functionally, required for the insertion and/or proper folding and/or complex formation of integral membrane proteins into the membrane. Involved in integration of membrane proteins that insert both dependently and independently of the Sec translocase complex, as well as at least some lipoproteins. Aids folding of multispanning membrane proteins. The protein is Membrane protein insertase YidC of Salmonella dublin (strain CT_02021853).